Here is a 717-residue protein sequence, read N- to C-terminus: Mitochondrial potassium channel ATP-binding subunit (717 aa).

A mitochondrion-targeting transit peptide spans 1–25; sequence MLVHLFRFGIRGGPVPGWSLQSLRF. The next 4 helical transmembrane spans lie at 127-147, 178-198, 278-298, and 365-385; these read LLAL…NVQI, VQLL…LVLL, LMLA…GSGL, and NIAF…LVAG. The ABC transmembrane type-1 domain occupies 132–419; sequence AAIVLALGAA…LSVLFGQVVR (288 aa). Residues 454–691 form the ABC transporter domain; it reads ITFQNVTFSY…GGLYSELIRR (238 aa). 489-496 contacts ATP; sequence GQSGGGKT. The tract at residues 695-717 is disordered; that stretch reads DASLTSTPPAEKPEDPKSCQSKA.

The protein belongs to the ABC transporter superfamily. ABCB family. Multidrug resistance exporter (TC 3.A.1.201) subfamily. The mitochondrial potassium channel (mitoK(ATP)) is composed of 4 subunits of CCDC51/MITOK and 4 subunits of ABCB8/MITOSUR. Interacts with PAAT. Interacts with NRP1; NRP1 regulates ABCB8/MITOSUR protein levels in mitochondria.

Its subcellular location is the mitochondrion inner membrane. With respect to regulation, channel activity inhibited by ATP via ABCB8/MITOSUR subunit. In terms of biological role, ATP-binding subunit of the mitochondrial ATP-gated potassium channel (mitoK(ATP)). Together with pore-forming subunit CCDC51/MITOK of the mitoK(ATP) channel, mediates ATP-dependent potassium currents across the mitochondrial inner membrane. An increase in ATP intracellular levels closes the channel, inhibiting K(+) transport, whereas a decrease in ATP levels enhances K(+) uptake in the mitochondrial matrix. Plays a role in mitochondrial iron transport. Required for maintenance of normal cardiac function, possibly by influencing mitochondrial iron export and regulating the maturation of cytosolic iron sulfur cluster-containing enzymes. This is Mitochondrial potassium channel ATP-binding subunit from Mus musculus (Mouse).